The sequence spans 172 residues: Small ribosomal subunit protein uS5 (172 aa).

The S5 DRBM domain occupies 17–80 (LREKMIAVNR…DEARRKMIKV (64 aa)).

Belongs to the universal ribosomal protein uS5 family. Part of the 30S ribosomal subunit. Contacts proteins S4 and S8.

In terms of biological role, with S4 and S12 plays an important role in translational accuracy. Its function is as follows. Located at the back of the 30S subunit body where it stabilizes the conformation of the head with respect to the body. The protein is Small ribosomal subunit protein uS5 of Polynucleobacter asymbioticus (strain DSM 18221 / CIP 109841 / QLW-P1DMWA-1) (Polynucleobacter necessarius subsp. asymbioticus).